A 782-amino-acid polypeptide reads, in one-letter code: MGKRDRADREKKKSKKRHYEDEEDEEDDAPGNDTQEAVPSAAGKQVDESGTKVDEYGAKDYRLQMPLKDDHTSRPLWVAPDGHIFLEAFSPVYKYAQDFLVAIAEPVCRPTHVHEYKLTAYSLYAAVSVGLQTSDITDYLRKLSKTGVPEGIIQFIKLCTVSYGKVKLVLKHNRYFVESSHPDVIQHLLQDPVIRECRLRNSEGEATELITETFTSKSAIAKSVEGSGGPSTSRVTDPQGKSDIPTDLFDFYEQMDKDEEEEEETQTVSFEVKQEMIEELQKRCIHLEYPLLAEYDFRNDSVNPDINIDLKPTAVLRPYQEKSLRKMFGNGRARSGVIVLPCGAGKSLVGVTAACTVRKRCLVLGNSAVSVEQWKAQFKMWSTIDDSQICRFTSDAKDKPIGCSIAISTYSMLGHTTKRSWEAERVMEWLKTQEWGLMILDEVHTIPAKMFRRVLTIVQAHCKLGLTATLVREDDKIVDLNFLIGPKLYEANWMELQNSGYIAKVQCAEVWCPMSPEFYREYVAIKTKKRILLYTMNPNKFRACQFLIKFHERRNDKIIVFADNVFALKEYAIRLNKPYIYGPTSQGERMQILQNFKHNPKINTIFISKVGDTSFDLPEANVLIQISSHGGSRRQEAQRLGRVLRAKKGMVAEEYNAFFYSLVSQDTQEMAYSTKRQRFLVDQGYSFKVITKLAGMEEEDLAFSTKEEQQQLLQKVLAATDLDAEEEVVAGEFGSKSSQVSRRFGTMSSMSGADDTVYMEYHSSRSKTSTKHVHPLFKRFRK.

A compositionally biased stretch (basic and acidic residues) spans M1 to K11. Positions M1 to T51 are disordered. The Nuclear localization signal signature appears at R6 to H18. Residues D21–P30 are compositionally biased toward acidic residues. Residues M327–L488 form the Helicase ATP-binding domain. L340 to S347 lines the ATP pocket. Positions D441–H444 match the DEVH box motif. One can recognise a Helicase C-terminal domain in the interval R542–A702. Position 686 is a phosphoserine (S686). Residue S751 is modified to Phosphoserine; by CK2.

This sequence belongs to the helicase family. RAD25/XPB subfamily. As to quaternary structure, component of the 7-subunit TFIIH core complex composed of XPB/ERCC3, XPD/ERCC2, GTF2H1, GTF2H2, GTF2H3, GTF2H4 and GTF2H5, which is active in NER. The core complex associates with the 3-subunit CDK-activating kinase (CAK) module composed of CCNH/cyclin H, CDK7 and MNAT1 to form the 10-subunit holoenzyme (holo-TFIIH) active in transcription. Interacts with PUF60. Interacts with ATF7IP. Interacts with KAT2A; leading to KAT2A recruitment to promoters and acetylation of histones. Part of TBP-based Pol II pre-initiation complex (PIC), in which Pol II core assembles with general transcription factors and other specific initiation factors including GTF2E1, GTF2E2, GTF2F1, GTF2F2, TCEA1, ERCC2, ERCC3, GTF2H2, GTF2H3, GTF2H4, GTF2H5, GTF2A1, GTF2A2, GTF2B and TBP; this large multi-subunit PIC complex mediates DNA unwinding and targets Pol II core to the transcription start site where the first phosphodiester bond forms. Phosphorylation on Ser-751 by CK2 controls the 5'-excision activity of ERCC1-XPF endonuclease; phosphorylated protein inhibits the excision activity and thus NER. Dephosphorylation reactivates the 5'-excision step. Phosphorylation has no effect on transcription or the 3'-5' helicase activity.

It is found in the nucleus. The enzyme catalyses Couples ATP hydrolysis with the unwinding of duplex DNA by translocating in the 3'-5' direction.. It catalyses the reaction ATP + H2O = ADP + phosphate + H(+). Phosphorylation on Ser-751 by CK2 controls the 5'-excision activity of ERCC1-XPF endonuclease; phosphorylated protein inhibits the excision activity and thus NER. ATPase activity is stimulated by TFIIH subunit p52 (GTF2H4). DNA translocase activity by this subunit in TFIIH is stimulated by XPA, ERCC5/XPG and XFP plus ERCC1. In terms of biological role, ATP-dependent 3'-5' DNA helicase/translocase; binds dsDNA rather than ssDNA, unzipping it in a translocase rather than classical helicase activity. Component of the general transcription and DNA repair factor IIH (TFIIH) core complex. When complexed to CDK-activating kinase (CAK), involved in RNA transcription by RNA polymerase II. The ATPase activity of XPB/ERCC3, but not its helicase activity, is required for DNA opening; it may wrap around the damaged DNA wedging it open, causing localized melting and twisting that allows XPD/ERCC2 helicase to anchor. The ATP-dependent helicase activity of XPB/ERCC3 may be required for promoter escape. Also involved in transcription-coupled nucleotide excision repair (NER) of damaged DNA. In NER, TFIIH acts by opening DNA around the lesion to allow the excision of the damaged oligonucleotide and its replacement by a new DNA fragment. The structure of the TFIIH transcription complex differs from the NER-TFIIH complex; large movements by XPD/ERCC2 and XPB/ERCC3 are stabilized by XPA. This chain is General transcription and DNA repair factor IIH helicase/translocase subunit XPB (ERCC3), found in Bos taurus (Bovine).